Consider the following 311-residue polypeptide: CD-NTase-associated protein 6 (311 aa).

ATP-binding positions include 84–89 and 215–216; these read GSGKTE and RR.

This sequence belongs to the AAA ATPase family. As to quaternary structure, homohexamer. Forms a 1:1:6 CdnC:Cap7:Cap6 complex.

Functionally, regulates complex assembly in a CBASS antivirus system. CBASS (cyclic oligonucleotide-based antiphage signaling system) provides immunity against bacteriophage. The CD-NTase protein synthesizes cyclic nucleotides in response to infection; these serve as specific second messenger signals. The signals activate a diverse range of effectors, leading to bacterial cell death and thus abortive phage infection. A type III-C(AAA) CBASS system. Binds and disassembles an active CdnC:Cap7 (Cap7 is also called HORMA) complex, inhibiting the complex's ability to synthesize cyclic nucleotide second messengers. An AAA+-ATPase remodeler, in the absence of foreign threat Cap6 (also called Trip13) probably maintains the Cap7 protein in its open, inactive state. Once activated (presumably by a bacteriophage protein) Cap7 binds to and activates its cognate CD-NTase (CdnC in this bacteria) to synthesize cAAA, a cyclic nucleotide second messenger. cAAA activates the NucC endonuclease which degrades all DNA in the infected cell, causing cell death and abortive phage infection. Its function is as follows. Protects E.coli strain JP313 against bacteriophage lambda cI- infection. When the cdnC-cap7-cap6-nucC operon is transformed into a susceptible E.coli strain it confers bacteriophage lambda cI- immunity. Mutations in the sensor (Cap7 also called HORMA) or effector proteins (CdnC, NucC) but not the disassembly protein (Cap6 also called Trip13) no longer confer immunity. The presence of the intact operon leads to culture collapse and cell death, which occurs before the phage has finished its replication cycle, thus protecting non-infected bacteria by aborting the phage infection and preventing its propagation. This chain is CD-NTase-associated protein 6, found in Escherichia coli (strain MS 115-1).